Consider the following 997-residue polypeptide: DNA polymerase I (997 aa).

Residues 174–261 enclose the 5'-3' exonuclease domain; that stretch reads VMPTQLLDLF…VPCVFSLEDS (88 aa). Positions 428–589 constitute a 3'-5' exonuclease domain; that stretch reads VPDVSLHTES…LYHYLKLRLE (162 aa).

The protein belongs to the DNA polymerase type-A family.

The enzyme catalyses DNA(n) + a 2'-deoxyribonucleoside 5'-triphosphate = DNA(n+1) + diphosphate. Functionally, in addition to polymerase activity, this DNA polymerase exhibits 3'-5' and 5'-3' exonuclease activity. This Treponema pallidum (strain Nichols) protein is DNA polymerase I (polA).